A 2625-amino-acid chain; its full sequence is Highly reducing polyketide synthase frbB (2625 aa).

The segment covering 1–10 (MRNIDEHMSE) has biased composition (basic and acidic residues). The disordered stretch occupies residues 1 to 25 (MRNIDEHMSERATLQSSGGYGERDS). A Ketosynthase family 3 (KS3) domain is found at 27–449 (VEPIAIIGMS…GTNAHVILDR (423 aa)). Catalysis depends on for beta-ketoacyl synthase activity residues Cys200, His334, and His375. A malonyl-CoA:ACP transacylase (MAT) domain region spans residues 563 to 883 (YVFSGQGAQY…DAASTLLTTI (321 aa)). The interval 942–1080 (HELLGNMSTD…GRIRAVLDDS (139 aa)) is N-terminal hotdog fold. The segment at 942 to 1252 (HELLGNMSTD…GMILAKLPGG (311 aa)) is dehydratase (DH) domain. The 314-residue stretch at 942–1255 (HELLGNMSTD…LAKLPGGTSR (314 aa)) folds into the PKS/mFAS DH domain. The Proton acceptor; for dehydratase activity role is filled by His974. Residues 1102-1255 (VRFVSPSAFY…LAKLPGGTSR (154 aa)) form a C-terminal hotdog fold region. Asp1167 (proton donor; for dehydratase activity) is an active-site residue. The tract at residues 1490–1673 (YHQIKAYIAE…GFVDTEPVFR (184 aa)) is methyltransferase (CMet) domain. The enoyl reductase (ER) domain stretch occupies residues 1907-2220 (GLLETFHWKP…SGKHIGKVIL (314 aa)). Residues 2261–2439 (AVYIVVGGLG…GYSINIGPVS (179 aa)) form a ketoreductase (KR) domain region. The Carrier domain occupies 2542–2619 (GAEAAVLTAI…HLARLAAEES (78 aa)). O-(pantetheine 4'-phosphoryl)serine is present on Ser2579.

The protein operates within antifungal biosynthesis. Its function is as follows. Highly reducing polyketide synthase; part of the gene cluster that mediates the biosynthesis of the antifungal antibiotic FR901469, an inhibitor of beta-1,3-glucansynthase, exerting antifungal activity against the pathogenes Candida albicans and Aspergillus fumigatus. FR901469 is a cyclic depsipeptide containing 12 amino acid residues and a fatty acid chain. The NRPS frbI contains 12 modules responsible for the formation of the depsipeptide backbone which is denoted as Acyl-Thr-Ala-Tyr-Val-4OHPro-Thr-Thr-3OHPro-threo3OHGln-Gly-Thr-Orn-OH (C71H116N14O23). The PKS frbB is probably involved in the production of the hydrocarbon chain, and the acyl-CoA ligase frbC might be involved in the transport of the chain to the peptide ptoduct of frbI. Because FR901469 contains 3 hydroxylated amino acid residues, the 3 oxygenases frbA, frbH, and frbJ might be participating in amino acid hydroxylation. As no thioesterase domains were detected in frbI or frbB, the thioesterases frbD and frbE may instead release and cyclize the products of the NRPS and PKS, respectively. The protein is Highly reducing polyketide synthase frbB of Dothideomycetidae sp. (strain 11243) (Fungal sp. (strain No.11243)).